Consider the following 228-residue polypeptide: MKISILSLFPELYETWINHSIISNAIKNNQVTIEIINFRLYTNDKHKKVDDYQYGGGAGMVLMIEPIVSAIRAIRTPNSYVILTTPKGQVFNQELANEFVSKYDHIIIIAGHYEGFDERINYYVDAQYSIGDFVLTGGELPSMVISDAVIRLLDGVISSSSLESESFNNYLLDYPVYTRPVVFEGHQVPDVLLSGHHKNIADFRKQQQEMITKKNRPDLYQKYLNSKK.

S-adenosyl-L-methionine-binding positions include glycine 111 and isoleucine 130–leucine 135.

This sequence belongs to the RNA methyltransferase TrmD family. In terms of assembly, homodimer.

It localises to the cytoplasm. The catalysed reaction is guanosine(37) in tRNA + S-adenosyl-L-methionine = N(1)-methylguanosine(37) in tRNA + S-adenosyl-L-homocysteine + H(+). Specifically methylates guanosine-37 in various tRNAs. This is tRNA (guanine-N(1)-)-methyltransferase from Ureaplasma urealyticum serovar 10 (strain ATCC 33699 / Western).